A 131-amino-acid chain; its full sequence is Small ribosomal subunit protein uS8 (131 aa).

This sequence belongs to the universal ribosomal protein uS8 family. Part of the 30S ribosomal subunit. Contacts proteins S5 and S12.

In terms of biological role, one of the primary rRNA binding proteins, it binds directly to 16S rRNA central domain where it helps coordinate assembly of the platform of the 30S subunit. This Neorickettsia sennetsu (strain ATCC VR-367 / Miyayama) (Ehrlichia sennetsu) protein is Small ribosomal subunit protein uS8.